The sequence spans 436 residues: ABC transporter permease YtrF (436 aa).

A signal peptide spans 1-31 (MRFKDQVHFIRRNMKKNRLRVFMTILATTMA). The N-palmitoyl cysteine moiety is linked to residue Cys32. Cys32 carries S-diacylglycerol cysteine lipidation. A coiled-coil region spans residues 115–165 (NMNDELKANMELEKGRVAKSENEIVVGYDFAKRLLTKKESEEYNKKIEEAK). 3 helical membrane-spanning segments follow: residues 293–313 (FKIGLIFVGCIAVIISAIGIF), 350–370 (YIGILGCVIGIIISYGVSYLV), and 396–416 (IPASLVIIAVVICGGVAVISG).

The protein belongs to the ABC-4 integral membrane protein family. As to quaternary structure, the complex is composed of 2 ATP-binding proteins (YtrB and YtrE), 2 transmembrane proteins (YtrC and YtrD) and a solute-binding protein (YtrF).

It is found in the cell membrane. Functionally, part of the ABC transporter complex YtrBCDEF that plays a role in acetoin utilization during stationary phase and sporulation. The sequence is that of ABC transporter permease YtrF (ytrF) from Bacillus subtilis (strain 168).